Consider the following 297-residue polypeptide: 4-hydroxy-tetrahydrodipicolinate synthase (297 aa).

Residue threonine 50 participates in pyruvate binding. Tyrosine 139 (proton donor/acceptor) is an active-site residue. The Schiff-base intermediate with substrate role is filled by lysine 167. Residue valine 209 coordinates pyruvate.

The protein belongs to the DapA family. As to quaternary structure, homotetramer; dimer of dimers.

It localises to the cytoplasm. It catalyses the reaction L-aspartate 4-semialdehyde + pyruvate = (2S,4S)-4-hydroxy-2,3,4,5-tetrahydrodipicolinate + H2O + H(+). It functions in the pathway amino-acid biosynthesis; L-lysine biosynthesis via DAP pathway; (S)-tetrahydrodipicolinate from L-aspartate: step 3/4. Its function is as follows. Catalyzes the condensation of (S)-aspartate-beta-semialdehyde [(S)-ASA] and pyruvate to 4-hydroxy-tetrahydrodipicolinate (HTPA). The protein is 4-hydroxy-tetrahydrodipicolinate synthase of Microcystis aeruginosa (strain NIES-843 / IAM M-2473).